Reading from the N-terminus, the 148-residue chain is UPF0178 protein lpl0088 (148 aa).

The protein belongs to the UPF0178 family.

This chain is UPF0178 protein lpl0088, found in Legionella pneumophila (strain Lens).